Here is a 350-residue protein sequence, read N- to C-terminus: MDTSLPSAILNNMVTATLILDDGLAIRYANPAAELLFSQSAKRIVEQSLSQLIQHASLDLALLTQPLQSGQSITDSDVTFVVDGRPLMLEVTVSPITWQKQLMLLVEMRKIDQQRRLSQELNQHAQQQAAKLLVRGLAHEIKNPLGGLRGAAQLLEKMLPDPSLTEYTHIIIEQADRLRALVDRLLGPQKPGKKTQENLHQILEKVRQLVELESQRSIVIERDYDPSLPEILMDADQIEQAMLNIVSNAAQILSHQEHGKITIRTRTVHQANIHGKRCKLAARVEITDNGPGIPPELQDTLFYPMVSGREGGTGLGLSISQNLIDQHNGKIDVESWPGHTTFTIYLPILR.

A PAS domain is found at 4–67 (SLPSAILNNM…LDLALLTQPL (64 aa)). A Histidine kinase domain is found at 136 to 350 (GLAHEIKNPL…TFTIYLPILR (215 aa)). Position 139 is a phosphohistidine; by autocatalysis (histidine 139). Lysine 330 is a binding site for ATP.

Autophosphorylated.

The protein resides in the cytoplasm. It carries out the reaction ATP + protein L-histidine = ADP + protein N-phospho-L-histidine.. Member of the two-component regulatory system NtrB/NtrC, which controls expression of the nitrogen-regulated (ntr) genes in response to nitrogen limitation. Under conditions of nitrogen limitation, NtrB autophosphorylates and transfers the phosphoryl group to NtrC. In the presence of nitrogen, acts as a phosphatase that dephosphorylates and inactivates NtrC. In Vibrio alginolyticus, this protein is Sensory histidine kinase/phosphatase NtrB (ntrB).